Here is a 134-residue protein sequence, read N- to C-terminus: Replication enhancer protein (134 aa).

This sequence belongs to the geminiviridae replication enhancer protein family. As to quaternary structure, homooligomer. Interacts with the replication-associated protein (REP). Interacts with host proliferating cell nuclear antigen (PCNA). Interacts with host retinoblastoma-related protein 1 (RBR1), and may thereby deregulate the host cell cycle. Oligomerization and interaction with PCNA are necessary for optimal replication enhancement.

In terms of biological role, increases viral DNA accumulation. Enhances infectivity and symptom expression. The polypeptide is Replication enhancer protein (Cynanchum acutum (Little mallow)).